A 342-amino-acid chain; its full sequence is MSRLKQPIFLKKIKKVINTIPRLEEQIFACRNKKRSDNPLLFIDRKDEERILMSLYFMENESSSPHSILCFIYWRYTKKIYRLSEDIVSDVANTYVDNIPAQILKELPSWSIYVSAENLHTILPTSYPIHGFFFYPFLNGGGGIIQLFIIDNLKQSQGTTGLKEKNIDVVGGIIGMEDSRGGLLGSRKMECIDNEVVVTVNEKLKDFRDREFNLLNAQISMVLYICSQINDIKEKNQFKRSEKHKKHVHTHHELPAHNIREWDVGIRMGQAIRQYRQQNPQDRATHRCKRPHIRRDTGIHTDRSKKPKLAHERKPRLIWLPPVPVNLEDVNKLPVVITPIDK.

A DNA-binding region (H-T-H motif) is located at residues 208–227 (RDREFNLLNAQISMVLYICS).

In terms of biological role, transcriptional inhibitor of the F plasmid transfer genes. FinQ may regulate a gene or genes encoded on the IncI plasmids, and coincidentally may inhibit F transfer when coresident. This Escherichia coli protein is Protein FinQ (finQ).